Here is a 202-residue protein sequence, read N- to C-terminus: Ras-related protein RIC1 (202 aa).

GTP contacts are provided by residues 15–23, 33–40, 63–67, 121–124, and 151–153; these read GDSGVGKSC, YLESYIST, DTAGQ, NKCD, and SAK. The Effector region signature appears at 37 to 45; sequence YISTIGVDF. Residues 174–185 show a composition bias toward polar residues; the sequence is ASQPATNASKPA. A disordered region spans residues 174–202; the sequence is ASQPATNASKPATVQMRGQPVAQQSSCCS. S-geranylgeranyl cysteine attachment occurs at residues Cys200 and Cys201.

Belongs to the small GTPase superfamily. Rab family.

Its subcellular location is the cell membrane. In terms of biological role, possesses GTPase activity. This is Ras-related protein RIC1 (RIC1) from Oryza sativa subsp. japonica (Rice).